The chain runs to 110 residues: Phosphoribosyl-AMP cyclohydrolase (110 aa).

Asp-80 provides a ligand contact to Mg(2+). Cys-81 contributes to the Zn(2+) binding site. Positions 82 and 84 each coordinate Mg(2+). Zn(2+)-binding residues include Cys-97 and Cys-104.

The protein belongs to the PRA-CH family. Homodimer. The cofactor is Mg(2+). Zn(2+) is required as a cofactor.

Its subcellular location is the cytoplasm. The enzyme catalyses 1-(5-phospho-beta-D-ribosyl)-5'-AMP + H2O = 1-(5-phospho-beta-D-ribosyl)-5-[(5-phospho-beta-D-ribosylamino)methylideneamino]imidazole-4-carboxamide. Its pathway is amino-acid biosynthesis; L-histidine biosynthesis; L-histidine from 5-phospho-alpha-D-ribose 1-diphosphate: step 3/9. In terms of biological role, catalyzes the hydrolysis of the adenine ring of phosphoribosyl-AMP. The sequence is that of Phosphoribosyl-AMP cyclohydrolase from Clostridium botulinum (strain ATCC 19397 / Type A).